We begin with the raw amino-acid sequence, 72 residues long: ATP synthase subunit c (72 aa).

2 helical membrane-spanning segments follow: residues Met-1–Ile-21 and Met-48–Ile-68.

It belongs to the ATPase C chain family. F-type ATPases have 2 components, F(1) - the catalytic core - and F(0) - the membrane proton channel. F(1) has five subunits: alpha(3), beta(3), gamma(1), delta(1), epsilon(1). F(0) has three main subunits: a(1), b(2) and c(10-14). The alpha and beta chains form an alternating ring which encloses part of the gamma chain. F(1) is attached to F(0) by a central stalk formed by the gamma and epsilon chains, while a peripheral stalk is formed by the delta and b chains.

It localises to the cell membrane. F(1)F(0) ATP synthase produces ATP from ADP in the presence of a proton or sodium gradient. F-type ATPases consist of two structural domains, F(1) containing the extramembraneous catalytic core and F(0) containing the membrane proton channel, linked together by a central stalk and a peripheral stalk. During catalysis, ATP synthesis in the catalytic domain of F(1) is coupled via a rotary mechanism of the central stalk subunits to proton translocation. Functionally, key component of the F(0) channel; it plays a direct role in translocation across the membrane. A homomeric c-ring of between 10-14 subunits forms the central stalk rotor element with the F(1) delta and epsilon subunits. This chain is ATP synthase subunit c, found in Bacillus caldotenax.